We begin with the raw amino-acid sequence, 411 residues long: Squalene synthase (411 aa).

2 residues coordinate NADP(+): Arg49 and Arg74. 3 residues coordinate Mg(2+): Asp77, Glu80, and Asp81. NADP(+) is bound by residues Arg212, Lys312, and Arg314. The chain crosses the membrane as a helical span at residues 388–408 (SPVLIVVIFIILAIILAQLFG).

This sequence belongs to the phytoene/squalene synthase family. The cofactor is Mg(2+).

It is found in the membrane. The enzyme catalyses 2 (2E,6E)-farnesyl diphosphate + NADH + H(+) = squalene + 2 diphosphate + NAD(+). It carries out the reaction 2 (2E,6E)-farnesyl diphosphate + NADPH + H(+) = squalene + 2 diphosphate + NADP(+). Converts farnesyl diphosphate (FPP) into squalene, a precursor for sterol biosynthesis in eukaryotes. The sequence is that of Squalene synthase from Solanum lycopersicum (Tomato).